A 219-amino-acid polypeptide reads, in one-letter code: Thiamine-phosphate synthase (219 aa).

4-amino-2-methyl-5-(diphosphooxymethyl)pyrimidine-binding positions include 44–48 (QFREK) and Asn79. Mg(2+)-binding residues include Asp80 and Asp99. Residue Ser117 coordinates 4-amino-2-methyl-5-(diphosphooxymethyl)pyrimidine. Residue 143 to 145 (TST) coordinates 2-[(2R,5Z)-2-carboxy-4-methylthiazol-5(2H)-ylidene]ethyl phosphate. 4-amino-2-methyl-5-(diphosphooxymethyl)pyrimidine is bound at residue Lys146. 2-[(2R,5Z)-2-carboxy-4-methylthiazol-5(2H)-ylidene]ethyl phosphate contacts are provided by residues Gly175 and 195–196 (IS).

Belongs to the thiamine-phosphate synthase family. Mg(2+) serves as cofactor.

The catalysed reaction is 2-[(2R,5Z)-2-carboxy-4-methylthiazol-5(2H)-ylidene]ethyl phosphate + 4-amino-2-methyl-5-(diphosphooxymethyl)pyrimidine + 2 H(+) = thiamine phosphate + CO2 + diphosphate. It catalyses the reaction 2-(2-carboxy-4-methylthiazol-5-yl)ethyl phosphate + 4-amino-2-methyl-5-(diphosphooxymethyl)pyrimidine + 2 H(+) = thiamine phosphate + CO2 + diphosphate. The enzyme catalyses 4-methyl-5-(2-phosphooxyethyl)-thiazole + 4-amino-2-methyl-5-(diphosphooxymethyl)pyrimidine + H(+) = thiamine phosphate + diphosphate. It participates in cofactor biosynthesis; thiamine diphosphate biosynthesis; thiamine phosphate from 4-amino-2-methyl-5-diphosphomethylpyrimidine and 4-methyl-5-(2-phosphoethyl)-thiazole: step 1/1. Condenses 4-methyl-5-(beta-hydroxyethyl)thiazole monophosphate (THZ-P) and 2-methyl-4-amino-5-hydroxymethyl pyrimidine pyrophosphate (HMP-PP) to form thiamine monophosphate (TMP). The chain is Thiamine-phosphate synthase from Bacillus cereus (strain AH187).